The following is a 799-amino-acid chain: Pentatricopeptide repeat-containing protein At2g26790, mitochondrial (799 aa).

Residues 1 to 27 (MRFSPTFFLLSQLRLTRRRAATSSRFY) constitute a mitochondrion transit peptide. PPR repeat units follow at residues 145–179 (LIRV…DCVV), 180–214 (DIKA…GLCA), 215–250 (NEYT…GYKT), 251–278 (FING…KYLA), 282–316 (LRAV…GFGL), 317–351 (DVYA…GLKV), 352–386 (NCVI…NIFL), 387–421 (DRVC…GIVP), 422–456 (DVIN…GMSP), 457–491 (DLIT…GPKP), 492–522 (NAVT…LEQK), 523–553 (CPEN…LEYP), 555–589 (RKSV…RVEP), 590–624 (GRSM…GLIP), 625–659 (DLFT…GIKP), 660–695 (DVVT…KASE), 708–742 (DVVC…GLEP), and 743–777 (DMVA…YNIP).

This sequence belongs to the PPR family. P subfamily.

It localises to the mitochondrion. This Arabidopsis thaliana (Mouse-ear cress) protein is Pentatricopeptide repeat-containing protein At2g26790, mitochondrial.